The chain runs to 295 residues: Tetrahydromethanopterin S-methyltransferase subunit E (295 aa).

Transmembrane regions (helical) follow at residues 4–24, 60–80, 87–107, 140–160, 161–181, 234–254, and 255–275; these read MITG…AGAA, GEPV…FVLM, VIMA…TYAV, GFIV…PIPG, FAHP…IGAI, YGGP…FWNT, and IVFG…LLII.

The protein belongs to the MtrE family. As to quaternary structure, the complex is composed of 8 subunits; MtrA, MtrB, MtrC, MtrD, MtrE, MtrF, MtrG and MtrH.

It localises to the cell membrane. The catalysed reaction is 5-methyl-5,6,7,8-tetrahydromethanopterin + coenzyme M + 2 Na(+)(in) = 5,6,7,8-tetrahydromethanopterin + methyl-coenzyme M + 2 Na(+)(out). The protein operates within one-carbon metabolism; methanogenesis from CO(2); methyl-coenzyme M from 5,10-methylene-5,6,7,8-tetrahydromethanopterin: step 2/2. Functionally, part of a complex that catalyzes the formation of methyl-coenzyme M and tetrahydromethanopterin from coenzyme M and methyl-tetrahydromethanopterin. This is an energy-conserving, sodium-ion translocating step. The chain is Tetrahydromethanopterin S-methyltransferase subunit E from Methanothermobacter marburgensis (strain ATCC BAA-927 / DSM 2133 / JCM 14651 / NBRC 100331 / OCM 82 / Marburg) (Methanobacterium thermoautotrophicum).